Reading from the N-terminus, the 232-residue chain is Beta-casein (232 aa).

The N-terminal stretch at 1–15 (MKLLILACFVALALA) is a signal peptide. A glycan (N-linked (GlcNAc...) asparagine) is linked at asparagine 22. Residue serine 24 is modified to Phosphoserine. Residue threonine 27 is modified to Phosphothreonine. Serine 30, serine 32, serine 33, and serine 34 each carry phosphoserine. Residues 48–63 (KLKREEQQQTENERQN) are compositionally biased toward basic and acidic residues. The disordered stretch occupies residues 48–74 (KLKREEQQQTENERQNKIHQFPQPQPL).

Belongs to the beta-casein family. In terms of tissue distribution, mammary gland specific. Secreted in milk.

It is found in the secreted. Important role in determination of the surface properties of the casein micelles. In Sus scrofa (Pig), this protein is Beta-casein (CSN2).